The primary structure comprises 92 residues: Cell division topological specificity factor (92 aa).

The protein belongs to the MinE family.

Its function is as follows. Prevents the cell division inhibition by proteins MinC and MinD at internal division sites while permitting inhibition at polar sites. This ensures cell division at the proper site by restricting the formation of a division septum at the midpoint of the long axis of the cell. The chain is Cell division topological specificity factor from Syntrophobacter fumaroxidans (strain DSM 10017 / MPOB).